The chain runs to 144 residues: MRLNTLSPAAGAKSAKKRVGRGIGSGLGKTGGRGVKGAGSRSGGGVRAGFEGGQMPLKIRMPKFGFYSRKGAVTAEVRLSEVAKVEGDVVDLNTLKQAGVITKGMQFAKIVLSGNIDRAVTVRGVSVTKGARAAIEAAGGKIEE.

A disordered region spans residues 1-50 (MRLNTLSPAAGAKSAKKRVGRGIGSGLGKTGGRGVKGAGSRSGGGVRAGF). Residues 21–50 (RGIGSGLGKTGGRGVKGAGSRSGGGVRAGF) are compositionally biased toward gly residues.

This sequence belongs to the universal ribosomal protein uL15 family. Part of the 50S ribosomal subunit.

Its function is as follows. Binds to the 23S rRNA. The sequence is that of Large ribosomal subunit protein uL15 from Tolumonas auensis (strain DSM 9187 / NBRC 110442 / TA 4).